Here is a 3073-residue protein sequence, read N- to C-terminus: Adhesion G-protein coupled receptor G4 (3073 aa).

Residues M1–S25 form the signal peptide. Residues L26 to R2691 lie on the Extracellular side of the membrane. The 200-residue stretch at K29 to C228 folds into the Pentraxin (PTX) domain. 2 cysteine pairs are disulfide-bonded: C58–C123 and C200–C228. An N-linked (GlcNAc...) asparagine glycan is attached at N233. The segment at S253–E272 is disordered. N662 carries an N-linked (GlcNAc...) asparagine glycan. 2 stretches are compositionally biased toward polar residues: residues G671–V696 and G929–T951. Disordered regions lie at residues G671–T697 and S924–T951. N-linked (GlcNAc...) asparagine glycans are attached at residues N1141, N1304, and N1495. Disordered stretches follow at residues F1565 to T1595, T1741 to T1760, and I1945 to R1972. Positions I1945–N1954 are enriched in polar residues. Low complexity predominate over residues S1955–R1972. One can recognise a GAIN-B domain in the interval S2535–T2684. 2 disulfides stabilise this stretch: C2635–C2666 and C2654–C2668. Residues C2635 to T2684 are GPS. The segment at H2673–T2684 is stachel. A helical transmembrane segment spans residues I2692–M2712. Residues V2713–K2728 lie on the Cytoplasmic side of the membrane. The helical transmembrane segment at I2729–W2749 threads the bilayer. The Extracellular portion of the chain corresponds to L2750–K2755. Residues V2756–W2776 traverse the membrane as a helical segment. C2759 and C2836 are oxidised to a cystine. Over M2777–N2798 the chain is Cytoplasmic. The chain crosses the membrane as a helical span at residues Y2799–L2819. Residues S2820–H2842 lie on the Extracellular side of the membrane. Residues I2843–F2863 form a helical membrane-spanning segment. Residues C2864 to T2892 lie on the Cytoplasmic side of the membrane. A helical membrane pass occupies residues I2893–V2913. Position 2914 (R2914) is a topological domain, extracellular. A helical transmembrane segment spans residues I2915 to F2935. The Cytoplasmic segment spans residues Y2936–L3073.

This sequence belongs to the G-protein coupled receptor 2 family. Adhesion G-protein coupled receptor (ADGR) subfamily. Homodimer; homodimerizes via its Pentraxin domain in a calcium-independent manner. Heterodimer of 2 chains generated by proteolytic processing; the large extracellular N-terminal fragment and the membrane-bound C-terminal fragment predominantly remain associated and non-covalently linked. Post-translationally, autoproteolytically processed at the GPS region of the GAIN-B domain; this cleavage modulates receptor activity.

Its subcellular location is the membrane. Forms a heterodimer of 2 chains generated by proteolytic processing that remain associated through non-covalent interactions mediated by the GAIN-B domain. In the inactivated receptor, the Stachel sequence (also named stalk) is embedded in the GAIN-B domain, where it adopts a beta-strand conformation. On activation, the Stachel moves into the 7 transmembrane region and adopts a twisted hook-shaped configuration that forms contacts within the receptor, leading to coupling of a G-alpha protein, which activates signaling. The cleaved GAIN-B and N-terminal domains can then dissociate from the rest of the receptor. Orphan adhesion G-protein coupled receptor (aGPCR). Ligand binding causes a conformation change that triggers signaling via guanine nucleotide-binding proteins (G proteins) and modulates the activity of downstream effectors, such as adenylate cyclase. ADGRG4 is coupled to G(s) G proteins and mediates activation of adenylate cyclase activity. May be act as sensor of mechanical forces. This Mus musculus (Mouse) protein is Adhesion G-protein coupled receptor G4.